A 101-amino-acid polypeptide reads, in one-letter code: Large ribosomal subunit protein eL43 (101 aa).

The segment at cysteine 40 to cysteine 62 adopts a C4-type zinc-finger fold.

This sequence belongs to the eukaryotic ribosomal protein eL43 family. The cofactor is Zn(2+).

In Pyrobaculum neutrophilum (strain DSM 2338 / JCM 9278 / NBRC 100436 / V24Sta) (Thermoproteus neutrophilus), this protein is Large ribosomal subunit protein eL43.